A 249-amino-acid chain; its full sequence is tRNA (guanine-N(1)-)-methyltransferase (249 aa).

S-adenosyl-L-methionine is bound by residues glycine 113 and 133–138; that span reads IGDFVL.

It belongs to the RNA methyltransferase TrmD family. As to quaternary structure, homodimer.

It is found in the cytoplasm. The enzyme catalyses guanosine(37) in tRNA + S-adenosyl-L-methionine = N(1)-methylguanosine(37) in tRNA + S-adenosyl-L-homocysteine + H(+). In terms of biological role, specifically methylates guanosine-37 in various tRNAs. The chain is tRNA (guanine-N(1)-)-methyltransferase from Aliivibrio fischeri (strain ATCC 700601 / ES114) (Vibrio fischeri).